A 42-amino-acid chain; its full sequence is Potassium channel toxin gamma-KTx 1.10 (42 aa).

4 disulfide bridges follow: Cys-5/Cys-23, Cys-11/Cys-34, Cys-20/Cys-39, and Cys-24/Cys-41.

In terms of tissue distribution, expressed by the venom gland.

It localises to the secreted. Functionally, blocks human Kv11.1/KCNH2/ERG1 potassium channels (reversible, IC(50)=3.4 nM). At high toxin concentrations, block of Kv11.1/KCNH2/ERG1 macroscopic current is almost complete. Does not accelerate the kinetics of the closing process and has no effect on the activation and inactivation kinetics of the Kv11.1/KCNH2/ERG1 channels. In Centruroides margaritatus (Central American bark Scorpion), this protein is Potassium channel toxin gamma-KTx 1.10.